Here is a 554-residue protein sequence, read N- to C-terminus: Cytochrome c oxidase subunit 1-alpha (554 aa).

Residues 26-56 (KDIGVLYLFTAGLAGLISVTLTVYMRMELQH) traverse the membrane as a helical segment. Cysteine 63 and cysteine 77 are oxidised to a cystine. The next 6 membrane-spanning stretches (helical) occupy residues 81-118 (AHLW…LHIG), 127-148 (LNNL…SLLS), 175-203 (AMDL…TFLN), 215-248 (PLFA…DRNF), 260-295 (DPVL…STFA), and 301-319 (GYLP…GFIV). Residue histidine 91 coordinates Fe(II)-heme a. Cu cation is bound by residues histidine 273 and tyrosine 277. A cross-link (1'-histidyl-3'-tyrosine (His-Tyr)) is located at residues 273–277 (HPEVY). Histidine 322 and histidine 323 together coordinate Cu cation. 5 helical membrane-spanning segments follow: residues 331-359 (LTQQ…IATM), 367-390 (KTPM…VIAQ), 399-425 (DTYY…GTYY), 436-463 (PEWA…FLGR), and 478-508 (SYWN…TLFA). Histidine 406 lines the heme a3 pocket. Histidine 408 contacts Fe(II)-heme a.

Belongs to the heme-copper respiratory oxidase family. Requires Cu(2+) as cofactor. Heme is required as a cofactor.

It localises to the cell inner membrane. The catalysed reaction is 4 Fe(II)-[cytochrome c] + O2 + 8 H(+)(in) = 4 Fe(III)-[cytochrome c] + 2 H2O + 4 H(+)(out). Its pathway is energy metabolism; oxidative phosphorylation. Functionally, subunit I and II form the functional core of the enzyme complex. Electrons originating in cytochrome c are transferred via heme a and Cu(A) to the binuclear center formed by heme a3 and Cu(B). This cytochrome c oxidase shows proton pump activity across the membrane in addition to the electron transfer. The polypeptide is Cytochrome c oxidase subunit 1-alpha (ctaDI) (Paracoccus denitrificans).